A 248-amino-acid polypeptide reads, in one-letter code: 2,3-bisphosphoglycerate-dependent phosphoglycerate mutase (248 aa).

Residues 8 to 15 (RHGESGWN) and Arg-58 each bind substrate. Catalysis depends on His-9, which acts as the Tele-phosphohistidine intermediate. Residues 82–101 (GTGEDRTEREDGSRKDRKEK) form a disordered region. Residue Glu-124 is the Proton donor/acceptor of the active site. Substrate-binding positions include 124–127 (ERYY) and Lys-135.

The protein belongs to the phosphoglycerate mutase family. BPG-dependent PGAM subfamily.

The enzyme catalyses (2R)-2-phosphoglycerate = (2R)-3-phosphoglycerate. Its pathway is carbohydrate degradation; glycolysis; pyruvate from D-glyceraldehyde 3-phosphate: step 3/5. Functionally, catalyzes the interconversion of 2-phosphoglycerate and 3-phosphoglycerate. The sequence is that of 2,3-bisphosphoglycerate-dependent phosphoglycerate mutase from Methanosarcina acetivorans (strain ATCC 35395 / DSM 2834 / JCM 12185 / C2A).